Here is a 687-residue protein sequence, read N- to C-terminus: Glycine--tRNA ligase beta subunit (687 aa).

This sequence belongs to the class-II aminoacyl-tRNA synthetase family. Tetramer of two alpha and two beta subunits.

The protein localises to the cytoplasm. The catalysed reaction is tRNA(Gly) + glycine + ATP = glycyl-tRNA(Gly) + AMP + diphosphate. This is Glycine--tRNA ligase beta subunit from Citrifermentans bemidjiense (strain ATCC BAA-1014 / DSM 16622 / JCM 12645 / Bem) (Geobacter bemidjiensis).